We begin with the raw amino-acid sequence, 185 residues long: Ribosome-recycling factor (185 aa).

It belongs to the RRF family.

It localises to the cytoplasm. Functionally, responsible for the release of ribosomes from messenger RNA at the termination of protein biosynthesis. May increase the efficiency of translation by recycling ribosomes from one round of translation to another. This chain is Ribosome-recycling factor, found in Histophilus somni (strain 2336) (Haemophilus somnus).